Reading from the N-terminus, the 158-residue chain is Lysozyme C (158 aa).

The N-terminal stretch at 1–18 is a signal peptide; the sequence is MRVLPLALLVGLLAVSDA. One can recognise a C-type lysozyme domain in the interval 19-150; it reads KVLGKCEFAR…DQYMAECWSR (132 aa). 4 disulfides stabilise this stretch: C24/C147, C46/C135, C80/C93, and C89/C107. Catalysis depends on residues E51 and D68.

This sequence belongs to the glycosyl hydrolase 22 family. As to quaternary structure, monomer. In terms of tissue distribution, strongly expressed in gill and gonad, and marginally detectable in hemolymph and lymphoid organ. Not expressed in kidney, hepatopancreas or tail muscle.

The protein localises to the secreted. The enzyme catalyses Hydrolysis of (1-&gt;4)-beta-linkages between N-acetylmuramic acid and N-acetyl-D-glucosamine residues in a peptidoglycan and between N-acetyl-D-glucosamine residues in chitodextrins.. In terms of biological role, lysozymes have primarily a bacteriolytic function; those in tissues and body fluids are associated with the monocyte-macrophage system and enhance the activity of immunoagents. Has bacteriolytic activity against Gram-positive bacterium M.luteus, and Gram-negative shrimp pathogenic bacteria V.alginolyticus, V.parahaemolyticus and V.vulnificus. May play a role in host defense. The chain is Lysozyme C from Penaeus merguiensis (Banana prawn).